The following is a 506-amino-acid chain: WD repeat-containing protein 55 homolog (506 aa).

Positions Met1 to Ala11 are enriched in basic and acidic residues. Disordered stretches follow at residues Met1–Asp20, Gln33–Ser87, and Ala100–Asp132. Positions Gln33–Leu48 are enriched in acidic residues. A compositionally biased stretch (low complexity) spans Gly61–Ser74. Acidic residues predominate over residues Asn78–Ser87. WD repeat units follow at residues Arg156–Leu195, Val200–Leu239, Ala243–Glu281, Glu284–Gln323, Pro326–Asp365, and Gln410–Asp449. The tract at residues Asp480–Thr506 is disordered. The segment covering Gly493 to Thr506 has biased composition (low complexity).

The protein belongs to the WD repeat WDR55 family.

The sequence is that of WD repeat-containing protein 55 homolog from Drosophila mojavensis (Fruit fly).